We begin with the raw amino-acid sequence, 1256 residues long: Muramidase-released protein (1256 aa).

The first 47 residues, 1–47 (MRRSNKKSFDWYGTKQQFSIRKYHFGAASVLLGVSLVLGAGAQVVKA), serve as a signal peptide directing secretion. Small repeat units follow at residues 663–681 (KTTGTVVAGTTTVKYVYEK) and 839–861 (KTDGEENGKVIEGTITVTYVYQK). Disordered stretches follow at residues 873-949 (PETD…VDTP), 967-994 (GNPIAPQEEGTKPNKSIPGYEFTGKTVT), and 1028-1049 (KEPVTDTPTSPEGTPYDTTDNK). The stretch at 953-1006 (VPVKKVVTNHVDEEGNPIAPQEEGTKPNKSIPGYEFTGKTVTDEDGNTTHIYKK) is one Large repeat. The segment covering 1033 to 1045 (DTPTSPEGTPYDT) has biased composition (polar residues). A Small repeat occupies 1064-1084 (RVDGTENGKVVEGETVVTYVY). Large repeat units follow at residues 1089–1142 (TPAK…IYKK) and 1143–1195 (TPAK…IYRK). A disordered region spans residues 1102 to 1137 (EGNPVAPQEEGTKPNKSIPGYEFTGKTVTDEDGNTT). The tract at residues 1196–1229 (LSNKPTTPEKETPAKPQAGKTASGKAQLPNTGEA) is disordered. The LPXTG sorting signal signature appears at 1223-1227 (LPNTG). Residue threonine 1226 is modified to Pentaglycyl murein peptidoglycan amidated threonine. Positions 1227-1256 (GEASSVAGALGTAMLVATLAFARKRRRNED) are cleaved as a propeptide — removed by sortase.

It localises to the secreted. Its subcellular location is the cell wall. The sequence is that of Muramidase-released protein (mrp) from Streptococcus suis.